The sequence spans 538 residues: Nicotinate phosphoribosyltransferase (538 aa).

Residues tyrosine 21 and threonine 210 each contribute to the nicotinate site. Phosphohistidine is present on histidine 213. Arginine 318 lines the nicotinate pocket. Position 380 (threonine 380) interacts with 5-phospho-alpha-D-ribose 1-diphosphate.

It belongs to the NAPRTase family. Homodimer. Mg(2+) serves as cofactor. The cofactor is Mn(2+). Post-translationally, transiently phosphorylated on a His residue during the reaction cycle. Phosphorylation strongly increases the affinity for substrates and increases the rate of nicotinate D-ribonucleotide production. Dephosphorylation regenerates the low-affinity form of the enzyme, leading to product release. Abundantly expressed in the small intestine, liver and kidney.

It localises to the cytoplasm. The protein localises to the cytosol. The catalysed reaction is nicotinate + 5-phospho-alpha-D-ribose 1-diphosphate + ATP + H2O = nicotinate beta-D-ribonucleotide + ADP + phosphate + diphosphate. The protein operates within cofactor biosynthesis; NAD(+) biosynthesis; nicotinate D-ribonucleotide from nicotinate: step 1/1. In terms of biological role, catalyzes the first step in the biosynthesis of NAD from nicotinic acid, the ATP-dependent synthesis of beta-nicotinate D-ribonucleotide from nicotinate and 5-phospho-D-ribose 1-phosphate. Helps prevent cellular oxidative stress via its role in NAD biosynthesis. The sequence is that of Nicotinate phosphoribosyltransferase (Naprt) from Mus musculus (Mouse).